The chain runs to 99 residues: MPWVPREHSHDDVQLQEFSRNFPVGRFPYECLEADIMAKIGLEELNGLEMEVMRRQMQMTSGRLHILEDQDATWCHKEAALFTLLVSVCIANLWLWVHW.

The chain crosses the membrane as a helical span at residues 79 to 98 (AALFTLLVSVCIANLWLWVH).

Interacts with BIK and RNF183. Interacts with IMMT/MIC60and EMD.

It is found in the mitochondrion. Its subcellular location is the mitochondrion outer membrane. It localises to the endoplasmic reticulum membrane. Its function is as follows. Involved in the regulation of endoplasmic reticulum (ER)-mitochondria coupling. Negatively regulates the ER-mitochondria distance and Ca(2+) transfer from ER to mitochondria possibly implicating it in the regulation of apoptosis. May collaborate with RNF183 to restrain BIK protein levels thus regulating apoptotic signaling. The sequence is that of Fetal and adult testis-expressed transcript protein homolog (Fate1) from Mus musculus (Mouse).